An 80-amino-acid polypeptide reads, in one-letter code: Large ribosomal subunit protein bL31B (80 aa).

Belongs to the bacterial ribosomal protein bL31 family. Type B subfamily. In terms of assembly, part of the 50S ribosomal subunit.

The protein is Large ribosomal subunit protein bL31B of Xanthomonas campestris pv. campestris (strain 8004).